We begin with the raw amino-acid sequence, 339 residues long: Uracil nucleotide/cysteinyl leukotriene receptor (339 aa).

Over 1-36 (MNGLEAALPSLTDNSSLAYSEQCGQETPLENMLFAC) the chain is Extracellular. Asn-14 carries N-linked (GlcNAc...) asparagine glycosylation. Residues 37 to 57 (FYLLDFILAFVGNALALWLFI) traverse the membrane as a helical segment. Residues 58–64 (WDHKSGT) lie on the Cytoplasmic side of the membrane. Residues 65–85 (PANVFLMHLAVADLSCVLVLP) traverse the membrane as a helical segment. Residues 86–105 (TRLVYHFSGNHWPFGEIPCR) lie on the Extracellular side of the membrane. Cys-104 and Cys-181 form a disulfide bridge. A helical membrane pass occupies residues 106 to 126 (LTGFLFYLNMYASIYFLTCIS). Residues 127–147 (ADRFLAIVHPVKSLKLRRPLY) are Cytoplasmic-facing. A helical membrane pass occupies residues 148-168 (AHLACAFLWIVVAVAMAPLLV). Residues 169 to 195 (SPQTVQTNHTVVCLQLYREKASHHALA) lie on the Extracellular side of the membrane. Asn-176 carries an N-linked (GlcNAc...) asparagine glycan. A helical transmembrane segment spans residues 196–216 (SLAVAFTFPFITTVTCYLLII). Residues 217–232 (RSLRQGPRIEKHLKNK) lie on the Cytoplasmic side of the membrane. A helical membrane pass occupies residues 233–253 (AVRMIAMVLAIFLICFVPYHI). The Extracellular segment spans residues 254–280 (HRSVYVLHYRGGGTSCAAQRALALGNR). Residues 281–301 (ITSCLTSLNGALDPVMYFFVA) form a helical membrane-spanning segment. Topologically, residues 302 to 339 (EKFRHALCNLLCSKRLTGPPPSFEGKTNESSLSARSEL) are cytoplasmic.

The protein belongs to the G-protein coupled receptor 1 family.

It is found in the cell membrane. In terms of biological role, dual specificity receptor for uracil nucleotides and cysteinyl leukotrienes (CysLTs). Signals through G(i) and inhibition of adenylyl cyclase. May mediate brain damage by nucleotides and CysLTs following ischemia. This Mus musculus (Mouse) protein is Uracil nucleotide/cysteinyl leukotriene receptor.